The sequence spans 144 residues: ATP synthase subunit 9, mitochondrial (144 aa).

The N-terminal 63 residues, 1–63 (MASTRVLASR…ATRQITQKRA (63 aa)), are a transit peptide targeting the mitochondrion. The next 2 helical transmembrane spans lie at 83-103 (TAAI…AALL) and 120-140 (AILG…VALM).

It belongs to the ATPase C chain family. In terms of assembly, F-type ATPases have 2 components, CF(1) - the catalytic core - and CF(0) - the membrane proton channel. CF(1) has five subunits: alpha(3), beta(3), gamma(1), delta(1), epsilon(1). CF(0) has three main subunits: a, b and c.

The protein resides in the mitochondrion membrane. Functionally, mitochondrial membrane ATP synthase (F(1)F(0) ATP synthase or Complex V) produces ATP from ADP in the presence of a proton gradient across the membrane which is generated by electron transport complexes of the respiratory chain. F-type ATPases consist of two structural domains, F(1) - containing the extramembraneous catalytic core and F(0) - containing the membrane proton channel, linked together by a central stalk and a peripheral stalk. During catalysis, ATP synthesis in the catalytic domain of F(1) is coupled via a rotary mechanism of the central stalk subunits to proton translocation. Part of the complex F(0) domain. A homomeric c-ring of probably 10 subunits is part of the complex rotary element. This chain is ATP synthase subunit 9, mitochondrial (ATP9), found in Podospora anserina (Pleurage anserina).